The chain runs to 855 residues: MKIAVVDKALNNTRYDKHFQLYGEEVDVFHMCNEKLSGRLLKKHITIGTPENPFDPNDYDFVILVGAEPFLYFAGKKGIGDYTGKRVEYNGYANWIASISPAQLHFKPEMKPVFDATVENIHDIINGREKIAKAGDYRPITDPDEAEEYIKMVYNMVIGPVAFDSETSALYCRDGYLLGVSISHQEYQGVYIDSDCLTEVAVYYLQKILDSENHTIVFHNLKFDMHFYKYHLGLTFDKAHKERRLHDTMLQHYVLDERRGTHGLKSLAMKYTDMGDYDFELDKFKDDYCKAHKIKKEDFTYDLIPFDIMWPYAAKDTDATIRLHNFFLPKIEKNEKLCSLYYDVLMPGCVFLQRVEDRGVPISIDRLKEAQYQLTHNLNKAREKLYTYPEVKQLEQDQNEAFNPNSVKQLRVLLFDYVGLTPTGKLTDTGADSTDAEALNELATQHPIAKTLLEIRKLTKLISTYVEKILLSIDADGCIRTGFHEHMTTSGRLSSSGKLNLQQLPRDESIIKGCVVAPPGYRVIAWDLTTAEVYYAAVLSGDRNMQQVFINMRNEPDKYPDFHSNIAHMVFKLQCEPRDVKKLFPALRQAAKAITFGILYGSGPAKVAHSVNEALLEQAAKTGEPFVECTVADAKEYIETYFGQFPQLKRWIDKCHDQIKNHGFIYSHFGRKRRLHNIHSEDRGVQGEEIRSGFNAIIQSASSDSLLLGAVDADNEIISLGLEQEMKIVMLVHDSVVAIVREDLIDQYNEILIRNIQKDRGISIPGCPIGIDSDSEAGGSRDYSCGKMKKQHPSIACIDDDEYTRYVKGVLLDAEFEYKKLAAMDKEHPDHSKYKDDKFIAVCKDLDNVKRILGA.

Positions 107–332 constitute a 3'-5' exonuclease domain; that stretch reads KPEMKPVFDA…LHNFFLPKIE (226 aa). The segment at 333–833 is polymerase; that stretch reads KNEKLCSLYY…MDKEHPDHSK (501 aa).

It belongs to the DNA polymerase type-A family. As to quaternary structure, single-chain monomer with multiple functions.

The enzyme catalyses DNA(n) + a 2'-deoxyribonucleoside 5'-triphosphate = DNA(n+1) + diphosphate. Functionally, replicates the viral genomic DNA. This polymerase possesses two enzymatic activities: DNA synthesis (polymerase) and an exonucleolytic activity that degrades single-stranded DNA in the 3'-5' direction for proofreading purpose. The DNA synthesis very likely occurs by strand displacement. The protein is DNA polymerase of Escherichia phage T5 (Enterobacteria phage T5).